Here is a 499-residue protein sequence, read N- to C-terminus: Glycerol kinase (499 aa).

T14 contributes to the ADP binding site. ATP is bound by residues T14, T15, and S16. T14 contributes to the sn-glycerol 3-phosphate binding site. R18 contacts ADP. Residues R84, E85, Y136, and D245 each contribute to the sn-glycerol 3-phosphate site. Glycerol-binding residues include R84, E85, Y136, D245, and Q246. Residues T267 and G310 each coordinate ADP. Residues T267, G310, Q314, and G411 each coordinate ATP. Residues G411 and N415 each coordinate ADP.

Belongs to the FGGY kinase family.

The enzyme catalyses glycerol + ATP = sn-glycerol 3-phosphate + ADP + H(+). Its pathway is polyol metabolism; glycerol degradation via glycerol kinase pathway; sn-glycerol 3-phosphate from glycerol: step 1/1. Its activity is regulated as follows. Inhibited by fructose 1,6-bisphosphate (FBP). Functionally, key enzyme in the regulation of glycerol uptake and metabolism. Catalyzes the phosphorylation of glycerol to yield sn-glycerol 3-phosphate. This Nitrosomonas eutropha (strain DSM 101675 / C91 / Nm57) protein is Glycerol kinase.